Reading from the N-terminus, the 499-residue chain is Trichothecene C-4 hydroxylase (499 aa).

Residues 7-29 form a helical membrane-spanning segment; sequence VGVAVQLVLTVLLASIPLRVIWN. N-linked (GlcNAc...) asparagine glycans are attached at residues Asn173 and Asn287. Position 442 (Cys442) interacts with heme. Asn473 carries an N-linked (GlcNAc...) asparagine glycan.

This sequence belongs to the cytochrome P450 family. The cofactor is heme.

It is found in the membrane. It functions in the pathway sesquiterpene biosynthesis; trichothecene biosynthesis. In terms of biological role, trichothecene C-4 hydroxylase; part of the gene cluster that mediates the production of the antimicrobial trichothecene harzianum A (HA) that plays a role in Botrytis cinerea antagonistic activity and plant defense priming. The biosynthesis of harzianum A begins with the cyclization of farnesyl diphosphate to trichodiene and is catalyzed by the trichodiene synthase TRI5. Trichodiene undergoes a series of oxygenations catalyzed by the cytochrome P450 monooxygenase TRI4. TRI4 controls the addition of 3 oxygens at C-2, C-11, and the C-12, C-13-epoxide to form the intermediate isotrichodiol. Isotrichodiol then undergoes a non-enzymatic isomerization and cyclization to form 12,13-epoxytrichothec-9-ene (EPT) which is further converted to trichodermol by the cytochrome P450 monooxygenase TRI11 via C-4 hydroxylation. The last step of HA synthesis is esterification of an octatriendioyl moiety to the C-4 oxygen of trichodermol. The octatriendioyl moiety is probably produced by the polyketide synthase TRI17 and the esterification performed by the trichothecene O-acetyltransferase TRI3. This chain is Trichothecene C-4 hydroxylase, found in Trichoderma arundinaceum.